The sequence spans 542 residues: Chondroitin sulfate N-acetylgalactosaminyltransferase 2 (542 aa).

Residues 1 to 13 (MSRRGSILHSRTQ) are Cytoplasmic-facing. The helical; Signal-anchor for type II membrane protein transmembrane segment at 14–34 (WLLLGLALLFSLVLFMYLLEC) threads the bilayer. The Lumenal portion of the chain corresponds to 35–542 (APQTDGNASL…AYRTNSETAG (508 aa)). A glycan (N-linked (GlcNAc...) asparagine) is linked at asparagine 41. The stretch at 59–105 (ALLQEQEEHYQTRATSLKRQIAQLKQELQDMSEKMRALQERKKLGAN) forms a coiled coil. Asparagine 333 carries N-linked (GlcNAc...) asparagine glycosylation. Residues aspartate 369 and histidine 486 each contribute to the a divalent metal cation site.

It belongs to the chondroitin N-acetylgalactosaminyltransferase family.

The protein resides in the golgi apparatus. The protein localises to the golgi stack membrane. The enzyme catalyses 3-O-(beta-D-GlcA-(1-&gt;3)-beta-D-Gal-(1-&gt;3)-beta-D-Gal-(1-&gt;4)-beta-D-Xyl)-L-seryl-[protein] + UDP-N-acetyl-alpha-D-galactosamine = 3-O-(beta-D-GalNAc-(1-&gt;4)-beta-D-GlcA-(1-&gt;3)-beta-D-Gal-(1-&gt;3)-beta-D-Gal-(1-&gt;4)-beta-D-Xyl)-L-seryl-[protein] + UDP + H(+). In terms of biological role, transfers 1,4-N-acetylgalactosamine (GalNAc) from UDP-GalNAc to the non-reducing end of glucuronic acid (GlcUA). Required for addition of the first GalNAc to the core tetrasaccharide linker and for elongation of chondroitin chains. In Mus musculus (Mouse), this protein is Chondroitin sulfate N-acetylgalactosaminyltransferase 2 (Csgalnact2).